The following is a 256-amino-acid chain: CNMALADIVRLPPASEAPFAPLGAPRDLSGPPSKLAVRPWGGADLPGPGLQLLHGTTTLAFKFAHGVVVAVDSRATAGSYIASQTVQKVIEINPSLLGTMAGGAADCSFWERLLARQCRVYELRNKEPISVAAASKLLANMVYQYKGMGLSMGTMICGWDKRGPGLYYVDSEGTRIPGEAFAVGSGSSYAYGVLDGGRRPDMATDEALELARRAIFQAARRDAYSGGSVTVYHVGPRGWRRVSSHDVAGLHDGYGG.

The propeptide at Cys1 to Gly55 is removed in mature form. The active-site Nucleophile is Thr56.

It belongs to the peptidase T1B family. The 26S proteasome consists of a 20S proteasome core and two 19S regulatory subunits. The 20S proteasome core is a barrel-shaped complex made of 28 subunits that are arranged in four stacked rings. The two outer rings are each formed by seven alpha subunits, and the two inner rings are formed by seven beta subunits. The proteolytic activity is exerted by three beta-subunits PSMB5, PSMB6 and PSMB7. Directly interacts with POMP. Interacts with ABCB1 and TAP1.

Its subcellular location is the cytoplasm. It localises to the nucleus. The enzyme catalyses Cleavage of peptide bonds with very broad specificity.. In terms of biological role, component of the 20S core proteasome complex involved in the proteolytic degradation of most intracellular proteins. This complex plays numerous essential roles within the cell by associating with different regulatory particles. Associated with two 19S regulatory particles, forms the 26S proteasome and thus participates in the ATP-dependent degradation of ubiquitinated proteins. The 26S proteasome plays a key role in the maintenance of protein homeostasis by removing misfolded or damaged proteins that could impair cellular functions, and by removing proteins whose functions are no longer required. Associated with the PA200 or PA28, the 20S proteasome mediates ubiquitin-independent protein degradation. This type of proteolysis is required in several pathways including spermatogenesis (20S-PA200 complex) or generation of a subset of MHC class I-presented antigenic peptides (20S-PA28 complex). Within the 20S core complex, PSMB5 displays a chymotrypsin-like activity. This chain is Proteasome subunit beta type-5 (PSMB5), found in Gallus gallus (Chicken).